A 283-amino-acid polypeptide reads, in one-letter code: Ribosomal RNA small subunit methyltransferase H (283 aa).

Residues 31–33 (GGH), Asp50, Phe77, Asp93, and Gln100 each bind S-adenosyl-L-methionine.

This sequence belongs to the methyltransferase superfamily. RsmH family.

It localises to the cytoplasm. The enzyme catalyses cytidine(1402) in 16S rRNA + S-adenosyl-L-methionine = N(4)-methylcytidine(1402) in 16S rRNA + S-adenosyl-L-homocysteine + H(+). In terms of biological role, specifically methylates the N4 position of cytidine in position 1402 (C1402) of 16S rRNA. The polypeptide is Ribosomal RNA small subunit methyltransferase H (Trichodesmium erythraeum (strain IMS101)).